The primary structure comprises 237 residues: Aspartate/glutamate leucyltransferase (237 aa).

This sequence belongs to the R-transferase family. Bpt subfamily.

It is found in the cytoplasm. It catalyses the reaction N-terminal L-glutamyl-[protein] + L-leucyl-tRNA(Leu) = N-terminal L-leucyl-L-glutamyl-[protein] + tRNA(Leu) + H(+). It carries out the reaction N-terminal L-aspartyl-[protein] + L-leucyl-tRNA(Leu) = N-terminal L-leucyl-L-aspartyl-[protein] + tRNA(Leu) + H(+). Functions in the N-end rule pathway of protein degradation where it conjugates Leu from its aminoacyl-tRNA to the N-termini of proteins containing an N-terminal aspartate or glutamate. This Shewanella amazonensis (strain ATCC BAA-1098 / SB2B) protein is Aspartate/glutamate leucyltransferase.